Consider the following 513-residue polypeptide: Keratin, type II cuticular Hb2 (513 aa).

The interval 1–120 (MSYHSFQPGS…PTVQRVKRDE (120 aa)) is head. An IF rod domain is found at 120 to 431 (EKEQIKCLNN…RLLEGEEHRL (312 aa)). The segment at 121 to 155 (KEQIKCLNNRFASFINKVRFLEQKNKLLETKWNFM) is coil 1A. Residues 156-165 (QQQRCCQTNI) form a linker 1 region. The tract at residues 166–266 (EPIFEGYISA…YEEEICLLQS (101 aa)) is coil 1B. The tract at residues 267-283 (QISETSVIVKMDNSREL) is linker 12. A coil 2 region spans residues 284-427 (DVDGIIAEIK…ATYRRLLEGE (144 aa)). A tail region spans residues 428–513 (EHRLCEGIGP…AGGSSPSHKH (86 aa)).

The protein belongs to the intermediate filament family. As to quaternary structure, heterotetramer of two type I and two type II keratins.

This chain is Keratin, type II cuticular Hb2 (KRT82), found in Homo sapiens (Human).